A 61-amino-acid polypeptide reads, in one-letter code: Large ribosomal subunit protein bL28 (61 aa).

The tract at residues 1–26 (MAKDFVTGRKTTFGKKRSHALNQTNR) is disordered.

The protein belongs to the bacterial ribosomal protein bL28 family.

The protein is Large ribosomal subunit protein bL28 of Ligilactobacillus salivarius (strain UCC118) (Lactobacillus salivarius).